Reading from the N-terminus, the 262-residue chain is Ribosome biogenesis GTPase A (262 aa).

Residues 12-157 (KRQIKDLLRL…ILDTPGILYK (146 aa)) form the CP-type G domain. GTP-binding positions include 54–57 (NKVD), 109–114 (NTGKST), and Gly-153.

This sequence belongs to the TRAFAC class YlqF/YawG GTPase family. MTG1 subfamily.

The protein localises to the cytoplasm. Its function is as follows. Required for a late step of 50S ribosomal subunit assembly. Has GTPase activity. Binds to the 23S rRNA. In Thermotoga maritima (strain ATCC 43589 / DSM 3109 / JCM 10099 / NBRC 100826 / MSB8), this protein is Ribosome biogenesis GTPase A.